Reading from the N-terminus, the 371-residue chain is Histidinol-phosphate aminotransferase (371 aa).

K228 is modified (N6-(pyridoxal phosphate)lysine).

It belongs to the class-II pyridoxal-phosphate-dependent aminotransferase family. Histidinol-phosphate aminotransferase subfamily. Pyridoxal 5'-phosphate serves as cofactor.

The enzyme catalyses L-histidinol phosphate + 2-oxoglutarate = 3-(imidazol-4-yl)-2-oxopropyl phosphate + L-glutamate. It participates in amino-acid biosynthesis; L-histidine biosynthesis; L-histidine from 5-phospho-alpha-D-ribose 1-diphosphate: step 7/9. The protein is Histidinol-phosphate aminotransferase of Methanococcus maripaludis (strain C6 / ATCC BAA-1332).